We begin with the raw amino-acid sequence, 90 residues long: Small ribosomal subunit protein bS18 (90 aa).

It belongs to the bacterial ribosomal protein bS18 family. As to quaternary structure, part of the 30S ribosomal subunit. Forms a tight heterodimer with protein bS6.

Functionally, binds as a heterodimer with protein bS6 to the central domain of the 16S rRNA, where it helps stabilize the platform of the 30S subunit. This is Small ribosomal subunit protein bS18 from Porphyromonas gingivalis (strain ATCC 33277 / DSM 20709 / CIP 103683 / JCM 12257 / NCTC 11834 / 2561).